Reading from the N-terminus, the 104-residue chain is Integration host factor subunit alpha (104 aa).

Belongs to the bacterial histone-like protein family. As to quaternary structure, heterodimer of an alpha and a beta chain.

Functionally, this protein is one of the two subunits of integration host factor, a specific DNA-binding protein that functions in genetic recombination as well as in transcriptional and translational control. This Buchnera aphidicola subsp. Cinara cedri (strain Cc) protein is Integration host factor subunit alpha.